We begin with the raw amino-acid sequence, 104 residues long: Large ribosomal subunit protein eL42 (104 aa).

This sequence belongs to the eukaryotic ribosomal protein eL42 family. In terms of assembly, component of the large ribosomal subunit. Mature ribosomes consist of a small (40S) and a large (60S) subunit. The 40S subunit contains about 32 different proteins and 1 molecule of RNA (18S). The 60S subunit contains about 42 different proteins and 3 molecules of RNA (28S, 5.8S and 5S).

It is found in the cytoplasm. In terms of biological role, component of the ribosome, a large ribonucleoprotein complex responsible for the synthesis of proteins in the cell. The small ribosomal subunit (SSU) binds messenger RNAs (mRNAs) and translates the encoded message by selecting cognate aminoacyl-transfer RNA (tRNA) molecules. The large subunit (LSU) contains the ribosomal catalytic site termed the peptidyl transferase center (PTC), which catalyzes the formation of peptide bonds, thereby polymerizing the amino acids delivered by tRNAs into a polypeptide chain. The nascent polypeptides leave the ribosome through a tunnel in the LSU and interact with protein factors that function in enzymatic processing, targeting, and the membrane insertion of nascent chains at the exit of the ribosomal tunnel. This is Large ribosomal subunit protein eL42 from Plasmodium falciparum (isolate 3D7).